A 363-amino-acid polypeptide reads, in one-letter code: Tetraacyldisaccharide 4'-kinase (363 aa).

78–85 is a binding site for ATP; it reads TVGGNGKT.

It belongs to the LpxK family.

The enzyme catalyses a lipid A disaccharide + ATP = a lipid IVA + ADP + H(+). It participates in glycolipid biosynthesis; lipid IV(A) biosynthesis; lipid IV(A) from (3R)-3-hydroxytetradecanoyl-[acyl-carrier-protein] and UDP-N-acetyl-alpha-D-glucosamine: step 6/6. Functionally, transfers the gamma-phosphate of ATP to the 4'-position of a tetraacyldisaccharide 1-phosphate intermediate (termed DS-1-P) to form tetraacyldisaccharide 1,4'-bis-phosphate (lipid IVA). The chain is Tetraacyldisaccharide 4'-kinase from Wigglesworthia glossinidia brevipalpis.